Consider the following 178-residue polypeptide: C-phycoerythrin class 2 subunit beta (178 aa).

Phycourobilin is bound by residues cysteine 50 and cysteine 61. (2R,3E)-phycoerythrobilin contacts are provided by cysteine 82 and cysteine 159.

It belongs to the phycobiliprotein family. Heterodimer of an alpha and a beta chain. In terms of processing, contains two covalently linked phycoerythrobilin chromophores and one covalently linked phycourobilin chromophore.

Its subcellular location is the cellular thylakoid membrane. Light-harvesting photosynthetic bile pigment-protein from the phycobiliprotein complex. This chain is C-phycoerythrin class 2 subunit beta (mpeB), found in Synechococcus sp. (strain WH8103).